The chain runs to 378 residues: Protein RecA (378 aa).

A disordered region spans residues 1–20; sequence MAAKKDKSVPDSKITDKEGK. ATP is bound at residue 80–87; the sequence is GAESSGKT. A disordered region spans residues 344–378; the sequence is GPVDKKKKKSKKEASSDDTDDENLEIDDAIDENND. The span at 359-378 shows a compositional bias: acidic residues; sequence SDDTDDENLEIDDAIDENND.

This sequence belongs to the RecA family.

It is found in the cytoplasm. Its function is as follows. Can catalyze the hydrolysis of ATP in the presence of single-stranded DNA, the ATP-dependent uptake of single-stranded DNA by duplex DNA, and the ATP-dependent hybridization of homologous single-stranded DNAs. It interacts with LexA causing its activation and leading to its autocatalytic cleavage. The protein is Protein RecA of Fusobacterium nucleatum subsp. nucleatum (strain ATCC 25586 / DSM 15643 / BCRC 10681 / CIP 101130 / JCM 8532 / KCTC 2640 / LMG 13131 / VPI 4355).